Reading from the N-terminus, the 402-residue chain is Lipid-A-disaccharide synthase (402 aa).

It belongs to the LpxB family.

The catalysed reaction is a lipid X + a UDP-2-N,3-O-bis[(3R)-3-hydroxyacyl]-alpha-D-glucosamine = a lipid A disaccharide + UDP + H(+). It functions in the pathway bacterial outer membrane biogenesis; LPS lipid A biosynthesis. In terms of biological role, condensation of UDP-2,3-diacylglucosamine and 2,3-diacylglucosamine-1-phosphate to form lipid A disaccharide, a precursor of lipid A, a phosphorylated glycolipid that anchors the lipopolysaccharide to the outer membrane of the cell. This chain is Lipid-A-disaccharide synthase, found in Cupriavidus pinatubonensis (strain JMP 134 / LMG 1197) (Cupriavidus necator (strain JMP 134)).